Here is a 112-residue protein sequence, read N- to C-terminus: UPF0060 membrane protein Mpe_A1656 (112 aa).

The next 4 membrane-spanning stretches (helical) occupy residues 9–29, 34–54, 65–85, and 91–111; these read GLFF…WLVL, SAWL…LLTL, AYGG…DGVV, and LVGG…PRAA.

The protein belongs to the UPF0060 family.

It is found in the cell inner membrane. The sequence is that of UPF0060 membrane protein Mpe_A1656 from Methylibium petroleiphilum (strain ATCC BAA-1232 / LMG 22953 / PM1).